The chain runs to 260 residues: Ras-related protein Rab-26 (260 aa).

A disordered region spans residues 1-56 (MSRKKTPKSKGGSEPATSTLPAAAAATNGPRLAHPRTVRPGPEAPPNGPPQSIRPS). 9 residues coordinate GTP: Ser76, Gly77, Val78, Gly79, Lys80, Thr81, Cys82, Ser99, and Thr100. Thr81 contributes to the Mg(2+) binding site. Short sequence motifs (switch) lie at residues 90-105 (GAFL…GIDF) and 123-140 (DTAG…YYRD). Mg(2+) contacts are provided by Thr100 and Asp123. Residues Gly126, Asn181, Lys182, Asp184, Ala212, and Arg213 each contribute to the GTP site. 2 S-geranylgeranyl cysteine lipidation sites follow: Cys257 and Cys258.

The protein belongs to the small GTPase superfamily. Rab family. Interacts with ADRA2B. Interacts with RIMS1. Mg(2+) is required as a cofactor. In terms of tissue distribution, detected in zymogenic cells in the stomach.

It is found in the cytoplasmic vesicle. The protein localises to the secretory vesicle membrane. Its subcellular location is the golgi apparatus membrane. The catalysed reaction is GTP + H2O = GDP + phosphate + H(+). Regulated by guanine nucleotide exchange factors (GEFs) which promote the exchange of bound GDP for free GTP. Regulated by GTPase activating proteins (GAPs) which increase the GTP hydrolysis activity. Inhibited by GDP dissociation inhibitors (GDIs). Functionally, the small GTPases Rab are key regulators of intracellular membrane trafficking, from the formation of transport vesicles to their fusion with membranes. Rabs cycle between an inactive GDP-bound form and an active GTP-bound form that is able to recruit to membranes different set of downstream effectors directly responsible for vesicle formation, movement, tethering and fusion. RAB26 mediates transport of ADRA2A and ADRA2B from the Golgi to the cell membrane. Plays a role in the maturation of zymogenic granules and in pepsinogen secretion in the stomach. Plays a role in the secretion of amylase from acinar granules in the parotid gland. This chain is Ras-related protein Rab-26, found in Mus musculus (Mouse).